We begin with the raw amino-acid sequence, 369 residues long: Cobalt-precorrin-5B C(1)-methyltransferase (369 aa).

It belongs to the CbiD family.

It catalyses the reaction Co-precorrin-5B + S-adenosyl-L-methionine = Co-precorrin-6A + S-adenosyl-L-homocysteine. The protein operates within cofactor biosynthesis; adenosylcobalamin biosynthesis; cob(II)yrinate a,c-diamide from sirohydrochlorin (anaerobic route): step 6/10. Its function is as follows. Catalyzes the methylation of C-1 in cobalt-precorrin-5B to form cobalt-precorrin-6A. This Methanococcus vannielii (strain ATCC 35089 / DSM 1224 / JCM 13029 / OCM 148 / SB) protein is Cobalt-precorrin-5B C(1)-methyltransferase.